Consider the following 228-residue polypeptide: Sugar fermentation stimulation protein homolog (228 aa).

Belongs to the SfsA family.

This chain is Sugar fermentation stimulation protein homolog, found in Desulfitobacterium hafniense (strain DSM 10664 / DCB-2).